The sequence spans 128 residues: UPF0102 protein BCG_2919c (128 aa).

The protein belongs to the UPF0102 family.

This chain is UPF0102 protein BCG_2919c, found in Mycobacterium bovis (strain BCG / Pasteur 1173P2).